Here is a 681-residue protein sequence, read N- to C-terminus: T-box-containing protein 2 (681 aa).

Positions 149–323 (LWDQFSRAGT…NNPFAKGFRE (175 aa)) form a DNA-binding region, T-box. Disordered regions lie at residues 316–351 (PFAK…EQRR), 456–489 (GITS…NQSN), 521–558 (PNIN…LIPG), and 589–611 (ESGE…CQSG). A compositionally biased stretch (low complexity) spans 470–489 (NSFTYYNSSSPSSSDSNQSN). Polar residues predominate over residues 521–534 (PNINIPNTVETNVH).

Monomer. As to expression, differentiating muscle and tailbud tip.

The protein resides in the nucleus. In terms of biological role, involved in the transcriptional regulation of genes required for muscle differentiation. Binds to a palindromic site (called T site) and activates gene transcription when bound to such a site. This is T-box-containing protein 2 (T2) from Halocynthia roretzi (Sea squirt).